A 376-amino-acid polypeptide reads, in one-letter code: Hydroxylysine kinase (376 aa).

The Proton acceptor role is filled by aspartate 229.

This sequence belongs to the aminoglycoside phosphotransferase family.

The protein localises to the cytoplasm. The catalysed reaction is (5R)-5-hydroxy-L-lysine + GTP = (5R)-5-phosphooxy-L-lysine + GDP + H(+). Its function is as follows. Catalyzes the GTP-dependent phosphorylation of 5-hydroxy-L-lysine. This chain is Hydroxylysine kinase (HYKK), found in Bos taurus (Bovine).